The chain runs to 482 residues: Spore germination protein A1 (482 aa).

Transmembrane regions (helical) follow at residues valine 242–leucine 262, phenylalanine 284–histidine 304, glutamate 321–leucine 341, proline 351–alanine 371, leucine 373–proline 393, and phenylalanine 406–valine 426.

Belongs to the GerABKA family.

The protein resides in the cell membrane. Its function is as follows. Forms a complex at the inner spore membrane which acts as a receptor for L-alanine, thus is involved in the stimulation of germination in response to alanine. Can stimulate germination in the absence of GerD and GerK gene products (fructose and glucose receptors, respectively), but the response is improved in their presence. In Bacillus subtilis (strain 168), this protein is Spore germination protein A1 (gerAA).